The following is a 226-amino-acid chain: Probable transcriptional regulator RABBIT EARS (226 aa).

Residues 55–77 form a C2H2-type zinc finger; sequence YSCSFCGREFKSAQALGGHMNVH. The segment at 80–102 is disordered; sequence DRARLKQQSLSPSSTDQATPPEC. Residues 85–97 show a composition bias toward polar residues; it reads KQQSLSPSSTDQA. The short motif at 212 to 216 is the EAR-like (transcriptional repression) element; it reads LDLEL.

In terms of tissue distribution, strongly expressed in inflorescences and flowers, and weakly in siliques, seedlings and roots. In flowers, it is expressed in petal primordia and their precursor cells. Also expressed in the lateral root caps and the basal cells of lateral roots.

Its subcellular location is the nucleus. Functionally, probable transcriptional regulator essential for petal development. Required for the early development of the organ primordia of the second whorl. Acts downstream of AP1 and PTL. The polypeptide is Probable transcriptional regulator RABBIT EARS (RBE) (Arabidopsis thaliana (Mouse-ear cress)).